We begin with the raw amino-acid sequence, 494 residues long: UPF0371 protein Sez_1293 (494 aa).

This sequence belongs to the UPF0371 family.

The sequence is that of UPF0371 protein Sez_1293 from Streptococcus equi subsp. zooepidemicus (strain MGCS10565).